Reading from the N-terminus, the 66-residue chain is ATP synthase protein 8 (66 aa).

Residues 8–24 traverse the membrane as a helical segment; the sequence is PWPMVIMSMILTLFYIT. Lys-54 carries the N6-acetyllysine; alternate modification. N6-succinyllysine; alternate is present on Lys-54. Lys-57 carries the N6-acetyllysine modification.

Belongs to the ATPase protein 8 family. F-type ATPases have 2 components, CF(1) - the catalytic core - and CF(0) - the membrane proton channel. Component of an ATP synthase complex composed of ATP5PB, ATP5MC1, ATP5F1E, ATP5PD, ATP5ME, ATP5PF, ATP5MF, MT-ATP6, MT-ATP8, ATP5F1A, ATP5F1B, ATP5F1D, ATP5F1C, ATP5PO, ATP5MG, ATP5MK and ATP5MJ. Interacts with PRICKLE3.

The protein localises to the mitochondrion membrane. Mitochondrial membrane ATP synthase (F(1)F(0) ATP synthase or Complex V) produces ATP from ADP in the presence of a proton gradient across the membrane which is generated by electron transport complexes of the respiratory chain. F-type ATPases consist of two structural domains, F(1) - containing the extramembraneous catalytic core and F(0) - containing the membrane proton channel, linked together by a central stalk and a peripheral stalk. During catalysis, ATP synthesis in the catalytic domain of F(1) is coupled via a rotary mechanism of the central stalk subunits to proton translocation. Part of the complex F(0) domain. Minor subunit located with subunit a in the membrane. This Alouatta sara (Bolivian red howler monkey) protein is ATP synthase protein 8 (MT-ATP8).